A 269-amino-acid chain; its full sequence is UPF0761 membrane protein NTHI0384 (269 aa).

6 helical membrane passes run 32–52 (MLAIVPLVMVIFSIFSAFPVF), 89–109 (MSAVGIVSLIAVALMLINNID), 128–148 (FAIYWMILTLGPLIIGVSIGI), 168–188 (LLSFVPFLFTWFIFTLIYTVV), 203–223 (FLAAIFFTLGKQAFTWYVVTF), and 232–252 (AMATLPIMLLWIQISWLVVLV).

Belongs to the UPF0761 family.

The protein localises to the cell inner membrane. The chain is UPF0761 membrane protein NTHI0384 from Haemophilus influenzae (strain 86-028NP).